The following is a 1083-amino-acid chain: Phospholipase D beta 1 (1083 aa).

3 stretches are compositionally biased toward pro residues: residues 26 to 38 (RPPS…PPPT), 46 to 66 (YPYP…PPPH), and 132 to 148 (QYPP…PPPQ). Positions 26 to 231 (RPPSSEPYPP…PNSSFPSNSH (206 aa)) are disordered. Polar residues-rich tracts occupy residues 191–213 (ISTN…SWQS) and 222–231 (PNSSFPSNSH). The C2 domain maps to 252–393 (HSADMQMTLF…YSGAKIEGTY (142 aa)). Aspartate 455 is a Ca(2+) binding site. A PLD phosphodiesterase 1 domain is found at 595 to 630 (TIYTHHQKNVIVDADAGGNRRKIIAFVGGLDLCDGR). Active-site residues include histidine 600, lysine 602, and aspartate 607. Histidine 600 lines the a 1,2-diacyl-sn-glycero-3-phosphate pocket. Ca(2+)-binding residues include histidine 636 and histidine 668. Positions 796 and 934 each coordinate a 1,2-diacyl-sn-glycero-3-phosphate. The PLD phosphodiesterase 2 domain maps to 929 to 956 (FMVYVHSKGMVVDDEYVVIGSANINQRS). Catalysis depends on residues histidine 934, lysine 936, and aspartate 941. Glutamate 997 contributes to the Ca(2+) binding site.

This sequence belongs to the phospholipase D family. C2-PLD subfamily. Requires Ca(2+) as cofactor. As to expression, expressed in stems, and to a lower amount in leaves, flowers and siliques.

The protein localises to the cytoplasm. Its subcellular location is the membrane. It carries out the reaction a 1,2-diacyl-sn-glycero-3-phosphocholine + H2O = a 1,2-diacyl-sn-glycero-3-phosphate + choline + H(+). With respect to regulation, inhibited by neomycin. Up-regulated by PIP2 binding. Functionally, hydrolyzes glycerol-phospholipids at the terminal phosphodiesteric bond to generate phosphatidic acids (PA). Plays an important role in various cellular processes, including phytohormone action, vesicular trafficking, secretion, cytoskeletal arrangement, meiosis, tumor promotion, pathogenesis, membrane deterioration and senescence. Involved in regulating stomatal movement and plant-water status. Can use phosphatidylserine (PS) and phosphatidylethanolamine (PE) as substrates only in the presence of PIP2. Can use phosphatidylcholine (PC), phosphatidylglycerol (PG) or N-acylphosphatidylethanolamine (NAPE) as substrates in the presence of PE and PIP2. Modulates defense responses to bacterial and fungal pathogens. This Arabidopsis thaliana (Mouse-ear cress) protein is Phospholipase D beta 1.